Reading from the N-terminus, the 1382-residue chain is Hepatocyte growth factor receptor (1382 aa).

The first 24 residues, 1–24 (MKAPAVLAPGVLVLLFTLVRKSHG), serve as a signal peptide directing secretion. The Extracellular portion of the chain corresponds to 25-935 (ECEEALAKSK…VQPDQNFTGL (911 aa)). Residues 27-516 (EEALAKSKMN…TGKKITKIPL (490 aa)) form the Sema domain. Asn45 carries an N-linked (GlcNAc...) asparagine glycan. Intrachain disulfides connect Cys95-Cys101, Cys98-Cys160, Cys133-Cys141, and Cys173-Cys176. The N-linked (GlcNAc...) asparagine glycan is linked to Asn106. Asn203 and Asn359 each carry an N-linked (GlcNAc...) asparagine glycan. 2 cysteine pairs are disulfide-bonded: Cys299–Cys364 and Cys386–Cys398. Asn400, Asn406, and Asn450 each carry an N-linked (GlcNAc...) asparagine glycan. Intrachain disulfides connect Cys521/Cys539, Cys527/Cys562, Cys530/Cys546, and Cys542/Cys552. IPT/TIG domains follow at residues 564 to 656 (PTIY…FSYV), 658 to 740 (PVIT…FSYQ), and 743 to 837 (PTVY…LIYV). O-linked (Man) threonine glycosylation occurs at Thr583. Residues Asn608 and Asn636 are each glycosylated (N-linked (GlcNAc...) asparagine). Thr677 carries O-linked (Man) threonine glycosylation. An N-linked (GlcNAc...) asparagine glycan is attached at Asn751. Thr762 is a glycosylation site (O-linked (Man) threonine). 3 N-linked (GlcNAc...) asparagine glycosylation sites follow: Asn786, Asn880, and Asn931. Residues 936–956 (IVGVVSISIILLLLLGLFLWL) form a helical membrane-spanning segment. The Cytoplasmic segment spans residues 957–1382 (KKRKQIKDLG…QDSVDDEVDT (426 aa)). Residue Ser967 is modified to Phosphoserine. Position 978 is a phosphothreonine (Thr978). Residues Ser991, Ser998, and Ser1001 each carry the phosphoserine modification. Tyr1004 is modified (phosphotyrosine). In terms of domain architecture, Protein kinase spans 1079-1346 (VHFNEVIGRG…RISAIFSTFI (268 aa)). ATP is bound by residues 1085–1093 (IGRGHFGCV) and Lys1111. Asp1205 serves as the catalytic Proton acceptor. Residues 1213–1382 (LDEKFTVKVA…QDSVDDEVDT (170 aa)) are interaction with RANBP9. Phosphotyrosine is present on Tyr1231. Phosphotyrosine; by autocatalysis occurs at positions 1235 and 1236. Thr1290 carries the phosphothreonine modification. The interval 1321–1360 (WHPKAEMRPSFSELVSRISAIFSTFIGEHYVHVNTTYVNV) is interaction with MUC20. Phosphotyrosine; by autocatalysis occurs at positions 1350 and 1357. Tyr1366 is subject to Phosphotyrosine.

This sequence belongs to the protein kinase superfamily. Tyr protein kinase family. As to quaternary structure, heterodimer made of an alpha chain (50 kDa) and a beta chain (145 kDa) which are disulfide linked. Binds PLXNB1. Interacts when phosphorylated with downstream effectors including STAT3, PIK3R1, SRC, PCLG1, GRB2 and GAB1. Interacts with SPSB1, SPSB2 and SPSB4. Interacts with INPP5D/SHIP1. When phosphorylated at Tyr-1357, interacts with INPPL1/SHIP2. Interacts with RANBP9 and RANBP10, as well as SPSB1, SPSB2, SPSB3 and SPSB4. SPSB1 binding occurs in the presence and in the absence of HGF, however HGF treatment has a positive effect on this interaction. Interacts with MUC20; prevents interaction with GRB2 and suppresses hepatocyte growth factor-induced cell proliferation. Interacts with GRB10. Interacts with PTPN1 and PTPN2. Interacts with HSP90AA1 and HSP90AB1; the interaction suppresses MET kinase activity. Interacts with tensin TNS3. Interacts (when phosphorylated) with tensin TNS4 (via SH2 domain); the interaction increases MET protein stability by inhibiting MET endocytosis and subsequent lysosomal degradation. Post-translationally, autophosphorylated in response to ligand binding on Tyr-1235 and Tyr-1236 in the kinase domain leading to further phosphorylation of Tyr-1350 and Tyr-1357 in the C-terminal multifunctional docking site. Dephosphorylated by PTPRJ at Tyr-1350 and Tyr-1366. Dephosphorylated by PTPN1 and PTPN2. Ubiquitinated. Ubiquitination by CBL regulates the receptor stability and activity through proteasomal degradation. In terms of processing, O-mannosylation of IPT/TIG domains by TMEM260 is required for protein maturation. O-mannosylated residues are composed of single mannose glycans that are not elongated or modified.

It is found in the membrane. It catalyses the reaction L-tyrosyl-[protein] + ATP = O-phospho-L-tyrosyl-[protein] + ADP + H(+). In its inactive state, the C-terminal tail interacts with the catalytic domain and inhibits the kinase activity. Upon ligand binding, the C-terminal tail is displaced and becomes phosphorylated, thus increasing the kinase activity. Its function is as follows. Receptor tyrosine kinase that transduces signals from the extracellular matrix into the cytoplasm by binding to hepatocyte growth factor/HGF ligand. Regulates many physiological processes including proliferation, scattering, morphogenesis and survival. Ligand binding at the cell surface induces autophosphorylation of MET on its intracellular domain that provides docking sites for downstream signaling molecules. Following activation by ligand, interacts with the PI3-kinase subunit PIK3R1, PLCG1, SRC, GRB2, STAT3 or the adapter GAB1. Recruitment of these downstream effectors by MET leads to the activation of several signaling cascades including the RAS-ERK, PI3 kinase-AKT, or PLCgamma-PKC. The RAS-ERK activation is associated with the morphogenetic effects while PI3K/AKT coordinates prosurvival effects. During embryonic development, MET signaling plays a role in gastrulation, development and migration of muscles and neuronal precursors, angiogenesis and kidney formation. In adults, participates in wound healing as well as organ regeneration and tissue remodeling. Also promotes differentiation and proliferation of hematopoietic cells. In Loxodonta africana (African elephant), this protein is Hepatocyte growth factor receptor (MET).